A 437-amino-acid chain; its full sequence is MPIIRKILARQILDSRGNPTVEVDVYTENSFGRAAVPSGASTGVHEAVELRDGDSAVYLGKGVLKAVDHVNTVINDRLKGMFVTDQEEIDMAMLALDGTPNKSRLGANALLGVSMACAKAGAEYSGLPLYRYIGGTMANTLPVPMMNVLNGGAHADNTVDFQEFMIMPVGFSSYSDALRSGAEIFHALKSLLKSKGLSTAVGDEGGFAPNLKSNEEAIELVIEAVGKAGYKIGSSTANGGLGDAQVMIALDPASSEFYDAAKQKYVFKKSSKQELSSLEMAEYWEKWASDYPIISIEDGMAEDDWDGWKILTDKIGSRVQLVGDDLFVTNTSRLALGIERGVGNSILVKVNQIGTLTETLQAIDLARRNGYTAVISHRSGETEDSTIAQIAVATNAGQIKTGSLSRSDRMAKYNELLRIEEELGLQAKYPALSAFRV.

Glutamine 162 serves as a coordination point for (2R)-2-phosphoglycerate. The active-site Proton donor is the glutamate 204. Mg(2+)-binding residues include aspartate 251, glutamate 297, and aspartate 324. (2R)-2-phosphoglycerate contacts are provided by lysine 349, arginine 378, serine 379, and lysine 400. Lysine 349 serves as the catalytic Proton acceptor.

This sequence belongs to the enolase family. Mg(2+) serves as cofactor.

It is found in the cytoplasm. It localises to the secreted. Its subcellular location is the cell surface. The catalysed reaction is (2R)-2-phosphoglycerate = phosphoenolpyruvate + H2O. It participates in carbohydrate degradation; glycolysis; pyruvate from D-glyceraldehyde 3-phosphate: step 4/5. In terms of biological role, catalyzes the reversible conversion of 2-phosphoglycerate (2-PG) into phosphoenolpyruvate (PEP). It is essential for the degradation of carbohydrates via glycolysis. The sequence is that of Enolase from Chlorobium phaeobacteroides (strain DSM 266 / SMG 266 / 2430).